Reading from the N-terminus, the 414-residue chain is Imidazolonepropionase (414 aa).

The segment covering 1–20 has biased composition (polar residues); sequence MSHQLFRNTRIYSPMDSGQP. The interval 1–26 is disordered; the sequence is MSHQLFRNTRIYSPMDSGQPSAGKAQ. H81 and H83 together coordinate Fe(3+). Zn(2+)-binding residues include H81 and H83. 4-imidazolone-5-propanoate contacts are provided by R90, Y153, and H186. Residue Y153 participates in N-formimidoyl-L-glutamate binding. H251 serves as a coordination point for Fe(3+). H251 lines the Zn(2+) pocket. Position 254 (E254) interacts with 4-imidazolone-5-propanoate. A Fe(3+)-binding site is contributed by D325. Residue D325 participates in Zn(2+) binding. The N-formimidoyl-L-glutamate site is built by N327 and G329. S330 lines the 4-imidazolone-5-propanoate pocket.

Belongs to the metallo-dependent hydrolases superfamily. HutI family. It depends on Zn(2+) as a cofactor. Requires Fe(3+) as cofactor.

It is found in the cytoplasm. It carries out the reaction 4-imidazolone-5-propanoate + H2O = N-formimidoyl-L-glutamate. It functions in the pathway amino-acid degradation; L-histidine degradation into L-glutamate; N-formimidoyl-L-glutamate from L-histidine: step 3/3. Its function is as follows. Catalyzes the hydrolytic cleavage of the carbon-nitrogen bond in imidazolone-5-propanoate to yield N-formimidoyl-L-glutamate. It is the third step in the universal histidine degradation pathway. This Desulfotalea psychrophila (strain LSv54 / DSM 12343) protein is Imidazolonepropionase.